A 712-amino-acid chain; its full sequence is Polyribonucleotide nucleotidyltransferase (712 aa).

Asp487 and Asp493 together coordinate Mg(2+). A KH domain is found at 554–613 (PKIITMTINPDKIRDVIGPSGKQINKIIEETGVKIDIEQDGTVFISSINQEMNDKAKKII). The region spanning 623 to 691 (GEIYEGKVKR…KQGRVNLSRK (69 aa)) is the S1 motif domain.

It belongs to the polyribonucleotide nucleotidyltransferase family. Mg(2+) serves as cofactor.

Its subcellular location is the cytoplasm. It carries out the reaction RNA(n+1) + phosphate = RNA(n) + a ribonucleoside 5'-diphosphate. In terms of biological role, involved in mRNA degradation. Catalyzes the phosphorolysis of single-stranded polyribonucleotides processively in the 3'- to 5'-direction. This Bacillus cereus (strain 03BB102) protein is Polyribonucleotide nucleotidyltransferase.